A 397-amino-acid chain; its full sequence is Serine protease MT3772 (397 aa).

A run of 4 helical transmembrane segments spans residues 9–29, 32–52, 62–82, and 102–122; these read IAVL…GALG, LSFG…PHIV, LFAA…AGVV, and VIGV…LAMP. Cys-214 and Cys-395 form a disulfide bridge. The active-site Proton acceptor is His-235. Asp-264 is a catalytic residue. Catalysis depends on Ser-343, which acts as the Charge relay system.

Belongs to the peptidase S1C family. Monomer.

The protein resides in the membrane. In terms of biological role, required for M.tuberculosis resistance to oxidative stress in addition to its role in resistance to acid, which is essential for virulence. This is Serine protease MT3772 from Mycobacterium tuberculosis (strain CDC 1551 / Oshkosh).